The chain runs to 184 residues: MGVIQAIDRLMTNPIPDGQVDDILRPQGESPLLQKGYVTTSVDALLNWARTGSMWPMTFGLACCAVEMMHAGAARLDLDRYGIVFRPSPRQSDVMIVAGTLVNKMAPALRKVYDQMPDPKWVISMGSCANGGGYYHYSYSVVRGCDRIVPVDVYVPGCPPTAEALVYGILQLQKKIWRTKTIAG.

Residues Cys63, Cys64, Cys128, and Cys158 each contribute to the [4Fe-4S] cluster site.

The protein belongs to the complex I 20 kDa subunit family. As to quaternary structure, NDH-1 is composed of 14 different subunits. Subunits NuoB, C, D, E, F, and G constitute the peripheral sector of the complex. [4Fe-4S] cluster is required as a cofactor.

The protein localises to the cell inner membrane. It catalyses the reaction a quinone + NADH + 5 H(+)(in) = a quinol + NAD(+) + 4 H(+)(out). Its function is as follows. NDH-1 shuttles electrons from NADH, via FMN and iron-sulfur (Fe-S) centers, to quinones in the respiratory chain. The immediate electron acceptor for the enzyme in this species is believed to be ubiquinone. Couples the redox reaction to proton translocation (for every two electrons transferred, four hydrogen ions are translocated across the cytoplasmic membrane), and thus conserves the redox energy in a proton gradient. The protein is NADH-quinone oxidoreductase subunit B of Xylella fastidiosa (strain M23).